The following is a 433-amino-acid chain: ATP-dependent protease ATPase subunit HslU (433 aa).

Residues valine 18, 60 to 65 (GVGKTE), aspartate 246, glutamate 311, and arginine 383 contribute to the ATP site.

This sequence belongs to the ClpX chaperone family. HslU subfamily. A double ring-shaped homohexamer of HslV is capped on each side by a ring-shaped HslU homohexamer. The assembly of the HslU/HslV complex is dependent on binding of ATP.

It localises to the cytoplasm. ATPase subunit of a proteasome-like degradation complex; this subunit has chaperone activity. The binding of ATP and its subsequent hydrolysis by HslU are essential for unfolding of protein substrates subsequently hydrolyzed by HslV. HslU recognizes the N-terminal part of its protein substrates and unfolds these before they are guided to HslV for hydrolysis. This is ATP-dependent protease ATPase subunit HslU from Rhodopseudomonas palustris (strain BisB5).